Consider the following 467-residue polypeptide: 3-isopropylmalate dehydratase large subunit (467 aa).

Cys-347, Cys-407, and Cys-410 together coordinate [4Fe-4S] cluster. Over residues 422–442 (QISASSSNRNFKGRQGSSSGR) the composition is skewed to polar residues. The disordered stretch occupies residues 422–443 (QISASSSNRNFKGRQGSSSGRT).

This sequence belongs to the aconitase/IPM isomerase family. LeuC type 1 subfamily. In terms of assembly, heterodimer of LeuC and LeuD. The cofactor is [4Fe-4S] cluster.

The enzyme catalyses (2R,3S)-3-isopropylmalate = (2S)-2-isopropylmalate. It participates in amino-acid biosynthesis; L-leucine biosynthesis; L-leucine from 3-methyl-2-oxobutanoate: step 2/4. In terms of biological role, catalyzes the isomerization between 2-isopropylmalate and 3-isopropylmalate, via the formation of 2-isopropylmaleate. The polypeptide is 3-isopropylmalate dehydratase large subunit (Nostoc punctiforme (strain ATCC 29133 / PCC 73102)).